Here is a 408-residue protein sequence, read N- to C-terminus: Argininosuccinate synthase (408 aa).

ATP contacts are provided by residues 9–17 (AYSGGLDTS) and Ala36. Residues Tyr87 and Ser92 each contribute to the L-citrulline site. Gly117 serves as a coordination point for ATP. 3 residues coordinate L-aspartate: Thr119, Asn123, and Asp124. Asn123 is a binding site for L-citrulline. 5 residues coordinate L-citrulline: Arg127, Ser176, Ser185, Glu261, and Tyr273.

This sequence belongs to the argininosuccinate synthase family. Type 1 subfamily. In terms of assembly, homotetramer.

It is found in the cytoplasm. The catalysed reaction is L-citrulline + L-aspartate + ATP = 2-(N(omega)-L-arginino)succinate + AMP + diphosphate + H(+). Its pathway is amino-acid biosynthesis; L-arginine biosynthesis; L-arginine from L-ornithine and carbamoyl phosphate: step 2/3. This is Argininosuccinate synthase from Deinococcus deserti (strain DSM 17065 / CIP 109153 / LMG 22923 / VCD115).